We begin with the raw amino-acid sequence, 335 residues long: Glucokinase (335 aa).

11–16 serves as a coordination point for ATP; sequence ADIGGT.

The protein belongs to the bacterial glucokinase family.

The protein localises to the cytoplasm. It carries out the reaction D-glucose + ATP = D-glucose 6-phosphate + ADP + H(+). In Xanthomonas axonopodis pv. citri (strain 306), this protein is Glucokinase.